A 196-amino-acid chain; its full sequence is MNFMKNLTRGIIRENPTFVLVLGMCPTLAVTTSAINGMGMGLATMLVLIGSNVAISALRKVIPDNIRIPAFVVVIASFVTIVGMLMKAYVPALDAALGIFIPLIVVNCIILARAEAFAFSNGIADSFADAVGMGLGFTLALTILGSIREILGAGSIFGFSLFGAAYEPVLLMILPPGAFLTLGLLIGLINWKTKKA.

5 consecutive transmembrane segments (helical) span residues 38 to 58 (MGMG…ISAL), 68 to 88 (IPAF…LMKA), 92 to 112 (ALDA…IILA), 127 to 147 (FADA…LGSI), and 169 to 189 (VLLM…IGLI).

This sequence belongs to the NqrDE/RnfAE family. As to quaternary structure, the complex is composed of six subunits: RnfA, RnfB, RnfC, RnfD, RnfE and RnfG.

Its subcellular location is the cell membrane. The enzyme catalyses 2 reduced [2Fe-2S]-[ferredoxin] + Na(+)(in) + NAD(+) + H(+) = 2 oxidized [2Fe-2S]-[ferredoxin] + Na(+)(out) + NADH. Its function is as follows. Part of a membrane-bound complex that couples electron transfer with translocation of ions across the membrane. Couples electron transfer from reduced ferredoxin to NAD(+) with electrogenic movement of Na(+) out of the cell. Involved in caffeate respiration. In Acetobacterium woodii (strain ATCC 29683 / DSM 1030 / JCM 2381 / KCTC 1655 / WB1), this protein is Na(+)-translocating ferredoxin:NAD(+) oxidoreductase complex subunit E.